Consider the following 466-residue polypeptide: Ribulose bisphosphate carboxylase large chain (466 aa).

Residue Lys-5 is modified to N6,N6,N6-trimethyllysine. Positions 114 and 164 each coordinate substrate. Lys-166 functions as the Proton acceptor in the catalytic mechanism. Lys-168 serves as a coordination point for substrate. Mg(2+)-binding residues include Lys-192, Asp-194, and Glu-195. Lys-192 bears the N6-carboxylysine mark. His-285 acts as the Proton acceptor in catalysis. Substrate contacts are provided by Arg-286, His-318, and Ser-370.

The protein belongs to the RuBisCO large chain family. Type I subfamily. Heterohexadecamer of 8 large chains and 8 small chains; disulfide-linked. The disulfide link is formed within the large subunit homodimers. Mg(2+) serves as cofactor. The disulfide bond which can form in the large chain dimeric partners within the hexadecamer appears to be associated with oxidative stress and protein turnover.

It is found in the plastid. Its subcellular location is the chloroplast. The catalysed reaction is 2 (2R)-3-phosphoglycerate + 2 H(+) = D-ribulose 1,5-bisphosphate + CO2 + H2O. It carries out the reaction D-ribulose 1,5-bisphosphate + O2 = 2-phosphoglycolate + (2R)-3-phosphoglycerate + 2 H(+). In terms of biological role, ruBisCO catalyzes two reactions: the carboxylation of D-ribulose 1,5-bisphosphate, the primary event in carbon dioxide fixation, as well as the oxidative fragmentation of the pentose substrate in the photorespiration process. Both reactions occur simultaneously and in competition at the same active site. This chain is Ribulose bisphosphate carboxylase large chain, found in Cercidiphyllum japonicum (Katsura tree).